Consider the following 604-residue polypeptide: MGKKEVKKNKNEGDTPHIRTPIVCVLGHVDHGKTSLLDRIRGSSVVAGEAGAITQHIGATIVPIDSIMSMSGGMKNLNISIPGLLFIDTPGHHAFTTLRARGGALADMAIVVVDITEGFQPQTIEAIQILRNCKTPFVVAATKLDRIPGWRSTEKSPFLKSFAAQNERVTLLVETKVYDIVATLAEHGFSSERFDRVSDFARNLAIVPVSAHTGEGIPDLLMVLIGLAQRYMEEALTLTVDGPGSGTVLEVKEEKGLGATIDVILFDGTIRVGDEIAIATTEGVQTTKVRSLLQPRPMQEILVEDRFLRVKEVVAAAGVKVSAPGLDQVIAGSPVRVIGEDPEEVKTSIAKEMTEINVSLSPEGLIIKADTIGALEALCKELTAHEIPVMRAEVGQVSRHDVIEAETIKDPLYRVLIAFNTPVLPDAQDLLKEPAYAEMIQFFSGNVIYHILEDYLEWRNNLKRIMDQKRFEKIIFPAKILVLPGCVFRQNNPAVVGVRILSGTLRTGVNLVRRDGKKAGTLKSMQLRKENIQEAHAGDEVAISIEGATVGRQFDVEDELLVGIPERHVKVLETEMLSHLNEDAKEVLNEYTRLFRKENPFWGK.

A tr-type G domain is found at 18 to 232 (IRTPIVCVLG…VLIGLAQRYM (215 aa)). The segment at 27 to 34 (GHVDHGKT) is G1. Position 27–34 (27–34 (GHVDHGKT)) interacts with GTP. Positions 52 to 56 (AITQH) are G2. The segment at 88-91 (DTPG) is G3. Residues 88–92 (DTPGH) and 142–145 (TKLD) each bind GTP. The G4 stretch occupies residues 142–145 (TKLD). The tract at residues 210-212 (SAH) is G5.

The protein belongs to the TRAFAC class translation factor GTPase superfamily. Classic translation factor GTPase family. IF-2 subfamily.

In terms of biological role, function in general translation initiation by promoting the binding of the formylmethionine-tRNA to ribosomes. Seems to function along with eIF-2. This chain is Probable translation initiation factor IF-2, found in Methanospirillum hungatei JF-1 (strain ATCC 27890 / DSM 864 / NBRC 100397 / JF-1).